A 431-amino-acid polypeptide reads, in one-letter code: Keratin, type I cytoskeletal 40 (431 aa).

A head region spans residues 1-89 (MTSDCSSTHC…CEDGVFTSNE (89 aa)). An IF rod domain is found at 89–400 (EKETMQFLND…GLLDSEDSRL (312 aa)). Residues 90-124 (KETMQFLNDRLASYLEKVRSLEETNAELESRIQEQ) are coil 1A. The tract at residues 125–135 (CEQDIPMVCPD) is linker 1. Positions 136 to 236 (YQRYFNTIED…HEEEVNLLRE (101 aa)) are coil 1B. Positions 237 to 252 (QLGDRLSVELDTAPTL) are linker 12. The interval 253–396 (DLNRVLDEMR…NTYWGLLDSE (144 aa)) is coil 2. The interval 397–431 (DSRLSCSPCSTTCTSSNTCEPCSAYVICTVENCCL) is tail.

The protein belongs to the intermediate filament family. In terms of assembly, heterotetramer of two type I and two type II keratins. In terms of tissue distribution, expressed in skin and scalp. Also very weakly expressed in tongue, breast, colon and small intestine. In the hair follicle, it is specifically present in the upper hair cuticle. Not present in the upper cortex (at protein level).

May play a role in late hair differentiation. The protein is Keratin, type I cytoskeletal 40 (KRT40) of Homo sapiens (Human).